We begin with the raw amino-acid sequence, 114 residues long: rRNA-processing protein cgrA (114 aa).

Positions 1–13 are enriched in low complexity; it reads MSSAAPAPSTHAA. Disordered stretches follow at residues 1–47 and 77–114; these read MSSA…AARK and RRAAKEEKERYEKMAEKMHRKRVERLKKREKRNKLLNS. Residues 40–101 adopt a coiled-coil conformation; it reads TKRAAARKEQ…EKMHRKRVER (62 aa). The span at 77 to 93 shows a compositional bias: basic and acidic residues; that stretch reads RRAAKEEKERYEKMAEK. Positions 94–114 are enriched in basic residues; it reads MHRKRVERLKKREKRNKLLNS.

The protein belongs to the CGR1 family.

The protein resides in the nucleus. Its subcellular location is the nucleolus. Involved in nucleolar integrity and required for processing of the pre-rRNA for the 60S ribosome subunit. This is rRNA-processing protein cgrA (cgrA) from Emericella nidulans (strain FGSC A4 / ATCC 38163 / CBS 112.46 / NRRL 194 / M139) (Aspergillus nidulans).